Reading from the N-terminus, the 264-residue chain is Acyl-[acyl-carrier-protein]--UDP-N-acetylglucosamine O-acyltransferase (264 aa).

It belongs to the transferase hexapeptide repeat family. LpxA subfamily. In terms of assembly, homotrimer.

It is found in the cytoplasm. The catalysed reaction is a (3R)-hydroxyacyl-[ACP] + UDP-N-acetyl-alpha-D-glucosamine = a UDP-3-O-[(3R)-3-hydroxyacyl]-N-acetyl-alpha-D-glucosamine + holo-[ACP]. The protein operates within glycolipid biosynthesis; lipid IV(A) biosynthesis; lipid IV(A) from (3R)-3-hydroxytetradecanoyl-[acyl-carrier-protein] and UDP-N-acetyl-alpha-D-glucosamine: step 1/6. Involved in the biosynthesis of lipid A, a phosphorylated glycolipid that anchors the lipopolysaccharide to the outer membrane of the cell. The sequence is that of Acyl-[acyl-carrier-protein]--UDP-N-acetylglucosamine O-acyltransferase from Glaesserella parasuis serovar 5 (strain SH0165) (Haemophilus parasuis).